The following is a 384-amino-acid chain: Cytochrome b (384 aa).

The next 4 helical transmembrane spans lie at 32-52 (VGSLLGLCLVIQIASGIFLAM), 76-98 (WLIRYIHANGASFFFICMYLHIG), 113-133 (LWVIGVIIFVVTMATAFMGYC), and 179-199 (FFALHFLLPFILAALVCMHLM). Residues histidine 82 and histidine 96 each coordinate heme b. Heme b contacts are provided by histidine 183 and histidine 197. Histidine 202 is a binding site for a ubiquinone. Transmembrane regions (helical) follow at residues 225–245 (FIFKDLVTVFVFLLVFSLFVF), 289–309 (LGGVIAMFGAILILLTLPYTD), 321–341 (LSKFMFFLFLFNFILLGNLGQ), and 348–368 (YIELGQYATAFYFAYYLLIVP).

The protein belongs to the cytochrome b family. In terms of assembly, fungal cytochrome b-c1 complex contains 10 subunits; 3 respiratory subunits, 2 core proteins and 5 low-molecular weight proteins. Cytochrome b-c1 complex is a homodimer. Heme b serves as cofactor.

It localises to the mitochondrion inner membrane. Component of the ubiquinol-cytochrome c reductase complex (complex III or cytochrome b-c1 complex) that is part of the mitochondrial respiratory chain. The b-c1 complex mediates electron transfer from ubiquinol to cytochrome c. Contributes to the generation of a proton gradient across the mitochondrial membrane that is then used for ATP synthesis. This chain is Cytochrome b (COB), found in Candida parapsilosis (Yeast).